Consider the following 488-residue polypeptide: Inosine-5'-monophosphate dehydrogenase (488 aa).

CBS domains follow at residues 95–153 and 157–216; these read VISN…SIKI and MTQE…AKDE. NAD(+) contacts are provided by residues aspartate 250 and 300 to 302; that span reads GIG. K(+) contacts are provided by glycine 302 and glycine 304. Residue serine 305 coordinates IMP. Cysteine 307 is a binding site for K(+). The Thioimidate intermediate role is filled by cysteine 307. IMP-binding positions include 340–342, 363–364, and 387–391; these read DGG, GS, and YRGMG. The active-site Proton acceptor is the arginine 403. Glutamate 417 lines the IMP pocket. Residues 468-488 are disordered; the sequence is GLAESHPHNIQITKESPNYSF. 3 residues coordinate K(+): glutamate 471, serine 472, and histidine 473. Polar residues predominate over residues 475–488; it reads HNIQITKESPNYSF.

The protein belongs to the IMPDH/GMPR family. In terms of assembly, homotetramer. It depends on K(+) as a cofactor.

The catalysed reaction is IMP + NAD(+) + H2O = XMP + NADH + H(+). Its pathway is purine metabolism; XMP biosynthesis via de novo pathway; XMP from IMP: step 1/1. Mycophenolic acid (MPA) is a non-competitive inhibitor that prevents formation of the closed enzyme conformation by binding to the same site as the amobile flap. In contrast, mizoribine monophosphate (MZP) is a competitive inhibitor that induces the closed conformation. MPA is a potent inhibitor of mammalian IMPDHs but a poor inhibitor of the bacterial enzymes. MZP is a more potent inhibitor of bacterial IMPDH. In terms of biological role, catalyzes the conversion of inosine 5'-phosphate (IMP) to xanthosine 5'-phosphate (XMP), the first committed and rate-limiting step in the de novo synthesis of guanine nucleotides, and therefore plays an important role in the regulation of cell growth. This Staphylococcus aureus (strain MW2) protein is Inosine-5'-monophosphate dehydrogenase.